A 689-amino-acid chain; its full sequence is Translation initiation factor IF-2 (689 aa).

A disordered region spans residues 41–109 (DYERVFGGGN…EAPAAEEREA (69 aa)). Positions 61–70 (RKGRQKKRRR) are enriched in basic residues. The span at 80 to 94 (RGPRAAAPSRPSRGR) shows a compositional bias: low complexity. The segment covering 96–109 (AAREEAPAAEEREA) has biased composition (basic and acidic residues). The 170-residue stretch at 192 to 361 (EKPPVITVMG…LVVAELEELR (170 aa)) folds into the tr-type G domain. The tract at residues 201–208 (GHVDHGKT) is G1. 201 to 208 (GHVDHGKT) is a binding site for GTP. Positions 226-230 (GITQH) are G2. Residues 247–250 (DTPG) are G3. Residues 247–251 (DTPGH) and 301–304 (NKID) contribute to the GTP site. A G4 region spans residues 301 to 304 (NKID). The tract at residues 337-339 (SAK) is G5.

Belongs to the TRAFAC class translation factor GTPase superfamily. Classic translation factor GTPase family. IF-2 subfamily.

Its subcellular location is the cytoplasm. One of the essential components for the initiation of protein synthesis. Protects formylmethionyl-tRNA from spontaneous hydrolysis and promotes its binding to the 30S ribosomal subunits. Also involved in the hydrolysis of GTP during the formation of the 70S ribosomal complex. In Rubrobacter xylanophilus (strain DSM 9941 / JCM 11954 / NBRC 16129 / PRD-1), this protein is Translation initiation factor IF-2.